A 393-amino-acid chain; its full sequence is Succinate--CoA ligase [ADP-forming] subunit beta (393 aa).

One can recognise an ATP-grasp domain in the interval 9–245 (KMLFAQYGIP…PSQEDKCETY (237 aa)). ATP is bound by residues Lys-46, 53-55 (GRG), Glu-99, Ile-102, and Glu-107. Asn-200 and Asp-214 together coordinate Mg(2+). Substrate-binding positions include Asn-265 and 322-324 (GIV).

It belongs to the succinate/malate CoA ligase beta subunit family. In terms of assembly, heterotetramer of two alpha and two beta subunits. It depends on Mg(2+) as a cofactor.

The catalysed reaction is succinate + ATP + CoA = succinyl-CoA + ADP + phosphate. It catalyses the reaction GTP + succinate + CoA = succinyl-CoA + GDP + phosphate. The protein operates within carbohydrate metabolism; tricarboxylic acid cycle; succinate from succinyl-CoA (ligase route): step 1/1. In terms of biological role, succinyl-CoA synthetase functions in the citric acid cycle (TCA), coupling the hydrolysis of succinyl-CoA to the synthesis of either ATP or GTP and thus represents the only step of substrate-level phosphorylation in the TCA. The beta subunit provides nucleotide specificity of the enzyme and binds the substrate succinate, while the binding sites for coenzyme A and phosphate are found in the alpha subunit. The polypeptide is Succinate--CoA ligase [ADP-forming] subunit beta (Baumannia cicadellinicola subsp. Homalodisca coagulata).